We begin with the raw amino-acid sequence, 66 residues long: Large ribosomal subunit protein bL35 (66 aa).

Belongs to the bacterial ribosomal protein bL35 family.

The sequence is that of Large ribosomal subunit protein bL35 from Borreliella afzelii (strain PKo) (Borrelia afzelii).